The primary structure comprises 108 residues: Large ribosomal subunit protein bL31B (108 aa).

The interval 88–108 is disordered; it reads AAVEEAPAVKSKKKAPIKKKK. Residues 97-108 show a composition bias toward basic residues; the sequence is KSKKKAPIKKKK.

The protein belongs to the bacterial ribosomal protein bL31 family. Type B subfamily. Part of the 50S ribosomal subunit.

This Chlamydia abortus (strain DSM 27085 / S26/3) (Chlamydophila abortus) protein is Large ribosomal subunit protein bL31B.